The primary structure comprises 204 residues: Holliday junction branch migration complex subunit RuvA (204 aa).

Positions 1–63 (MIGKLSGKAD…EEHIHLYGFL (63 aa)) are domain I. Residues 64 to 142 (TLEEKNFFNL…KISSSSAIKD (79 aa)) form a domain II region. A flexible linker region spans residues 143–153 (SLNIKNITPVT). Residues 153–204 (TSNEVMKALINLGFSRFEAQNVVQGIITQNPKISIDELIKTALKNRNSKFFS) form a domain III region.

The protein belongs to the RuvA family. Homotetramer. Forms an RuvA(8)-RuvB(12)-Holliday junction (HJ) complex. HJ DNA is sandwiched between 2 RuvA tetramers; dsDNA enters through RuvA and exits via RuvB. An RuvB hexamer assembles on each DNA strand where it exits the tetramer. Each RuvB hexamer is contacted by two RuvA subunits (via domain III) on 2 adjacent RuvB subunits; this complex drives branch migration. In the full resolvosome a probable DNA-RuvA(4)-RuvB(12)-RuvC(2) complex forms which resolves the HJ.

It localises to the cytoplasm. Functionally, the RuvA-RuvB-RuvC complex processes Holliday junction (HJ) DNA during genetic recombination and DNA repair, while the RuvA-RuvB complex plays an important role in the rescue of blocked DNA replication forks via replication fork reversal (RFR). RuvA specifically binds to HJ cruciform DNA, conferring on it an open structure. The RuvB hexamer acts as an ATP-dependent pump, pulling dsDNA into and through the RuvAB complex. HJ branch migration allows RuvC to scan DNA until it finds its consensus sequence, where it cleaves and resolves the cruciform DNA. The protein is Holliday junction branch migration complex subunit RuvA of Rickettsia canadensis (strain McKiel).